The sequence spans 633 residues: Leucine-rich repeat and IQ domain-containing protein 3 (633 aa).

LRR repeat units lie at residues 51 to 72 (SLRV…QGCK), 73 to 94 (KLIK…TFWN), and 98 to 119 (NLKL…CVLS). The region spanning 132-179 (CPVSLKKGYRHVLVNSIWPLKALDHHVISDEEIIQNWHLPERFKTFSQ) is the LRRCT domain. The IQ domain occupies 215-244 (HNSPVLIIQRWIRGFIVRKHLSPYFTRKRH). The interval 322–343 (NSKQPRHHIQKGQNEMKSDSED) is disordered. Residues 556-616 (EKREKRKYKQ…AKVEFINTYY (61 aa)) are a coiled coil.

In Rattus norvegicus (Rat), this protein is Leucine-rich repeat and IQ domain-containing protein 3 (Lrriq3).